Reading from the N-terminus, the 708-residue chain is Soluble guanylate cyclase gcy-37 (708 aa).

Residue H105 coordinates heme. Residues 368 to 409 (LNQSRICQMELNKKLEETMKKMKKMTEELEVKKSQTDRLLFE) adopt a coiled-coil conformation. The Guanylate cyclase domain maps to 434-562 (SVIFTDIPDF…NTVNVTKSIC (129 aa)). Residues D439 and D483 each coordinate Mg(2+).

The protein belongs to the adenylyl cyclase class-4/guanylyl cyclase family. As to quaternary structure, heterodimer; with other soluble guanylate cyclases. Requires heme as cofactor. Expressed in a small number of neurons, corresponding to URX, AQR and PQR neurons.

It is found in the cytoplasm. It carries out the reaction GTP = 3',5'-cyclic GMP + diphosphate. May be regulated by molecular oxygen. Probably not activated by nitric oxide (NO). Functionally, synthesizes cyclic GMP (cGMP) from GTP. May play a role in sensory neurons. The chain is Soluble guanylate cyclase gcy-37 (gcy-37) from Caenorhabditis elegans.